A 189-amino-acid chain; its full sequence is dCTP deaminase (189 aa).

DCTP contacts are provided by residues 112 to 117, 136 to 138, Gln-157, Tyr-171, and Gln-181; these read KSTYAR and TLE. Residue Glu-138 is the Proton donor/acceptor of the active site.

This sequence belongs to the dCTP deaminase family. Homotrimer.

It catalyses the reaction dCTP + H2O + H(+) = dUTP + NH4(+). Its pathway is pyrimidine metabolism; dUMP biosynthesis; dUMP from dCTP (dUTP route): step 1/2. In terms of biological role, catalyzes the deamination of dCTP to dUTP. In Xanthomonas campestris pv. campestris (strain 8004), this protein is dCTP deaminase.